The sequence spans 335 residues: Glyceraldehyde-3-phosphate dehydrogenase 2 (335 aa).

NAD(+) is bound by residues 12-13, Asp35, Arg79, and Ser121; that span reads RI. D-glyceraldehyde 3-phosphate is bound by residues 152-154 and Thr183; that span reads SCT. The Nucleophile role is filled by Cys153. Residue Asn184 participates in NAD(+) binding. D-glyceraldehyde 3-phosphate-binding positions include Arg198, 211-212, and Arg234; that span reads TG. Asn316 provides a ligand contact to NAD(+).

Belongs to the glyceraldehyde-3-phosphate dehydrogenase family. As to quaternary structure, homotetramer.

It is found in the cytoplasm. The catalysed reaction is D-glyceraldehyde 3-phosphate + phosphate + NAD(+) = (2R)-3-phospho-glyceroyl phosphate + NADH + H(+). It functions in the pathway carbohydrate degradation; glycolysis; pyruvate from D-glyceraldehyde 3-phosphate: step 1/5. Inhibited by pentalenolactone. Catalyzes the oxidative phosphorylation of glyceraldehyde 3-phosphate (G3P) to 1,3-bisphosphoglycerate (BPG) using the cofactor NAD. The first reaction step involves the formation of a hemiacetal intermediate between G3P and a cysteine residue, and this hemiacetal intermediate is then oxidized to a thioester, with concomitant reduction of NAD to NADH. The reduced NADH is then exchanged with the second NAD, and the thioester is attacked by a nucleophilic inorganic phosphate to produce BPG. The polypeptide is Glyceraldehyde-3-phosphate dehydrogenase 2 (gap2) (Streptomyces avermitilis (strain ATCC 31267 / DSM 46492 / JCM 5070 / NBRC 14893 / NCIMB 12804 / NRRL 8165 / MA-4680)).